Reading from the N-terminus, the 167-residue chain is Claudin domain-containing protein 2 (167 aa).

The next 4 membrane-spanning stretches (helical) occupy residues 13 to 32 (LLNL…NYWT), 61 to 81 (VSAA…GIGI), 96 to 116 (TIVL…VYTS), and 130 to 150 (YFFG…FLLA).

This sequence belongs to the PMP-22/EMP/MP20 family.

It is found in the membrane. The chain is Claudin domain-containing protein 2 (Cldnd2) from Mus musculus (Mouse).